The following is a 367-amino-acid chain: Putative F-box protein At3g21130 (367 aa).

An F-box domain is found at 4 to 50; the sequence is KRNTVYLSEDLIVEILSRVSAVSLARLRTTSKRWNALVKDERLAKKH.

The polypeptide is Putative F-box protein At3g21130 (Arabidopsis thaliana (Mouse-ear cress)).